The sequence spans 372 residues: MNSGIDLQGTFIKSLMDLGIPPGTAKAIWMPLPMILMLIGATVGVLVCVWLERKISAAAQQRIGPEYIGPLGLLAPVADGLKLVFKEDIVPAQADPWLFTLGPILVVLPVFLSYLIVPFGQNIVITNIGTGIFLWIALSSIQPIGLLMAGYSSNNKYSLLGGLRAAAQSISYEIPLALSVLAIVMMSNSLSTVDIVNQQSGYGILGWNIWRQPLGFLIFWIAALAECERLPFDLPEAEEELVAGYQTEYSGMKFALFYLSSYVNLVLSALLVAVLYLGGWDFPIPINVLANLVGVSEANPVLQVVSAALGITMTLVKAYFLVFIAILLRWTVPRVRIDQLLDLGWKFLLPVGLVNLLLTAALKLAFPVAFGG.

Helical transmembrane passes span 27-47, 65-85, 97-117, 128-148, 166-186, 204-224, 266-286, 308-328, and 347-367; these read AIWM…GVLV, PEYI…KLVF, WLFT…YLIV, IGTG…GLLM, AAQS…IVMM, ILGW…IAAL, VLSA…PIPI, ALGI…AILL, and FLLP…LAFP.

This sequence belongs to the complex I subunit 1 family. As to quaternary structure, NDH-1 is composed of at least 11 different subunits.

It is found in the cellular thylakoid membrane. The catalysed reaction is a plastoquinone + NADH + (n+1) H(+)(in) = a plastoquinol + NAD(+) + n H(+)(out). The enzyme catalyses a plastoquinone + NADPH + (n+1) H(+)(in) = a plastoquinol + NADP(+) + n H(+)(out). Functionally, NDH-1 shuttles electrons from an unknown electron donor, via FMN and iron-sulfur (Fe-S) centers, to quinones in the respiratory and/or the photosynthetic chain. The immediate electron acceptor for the enzyme in this species is believed to be plastoquinone. Couples the redox reaction to proton translocation, and thus conserves the redox energy in a proton gradient. The protein is NAD(P)H-quinone oxidoreductase subunit 1 of Trichormus variabilis (strain ATCC 29413 / PCC 7937) (Anabaena variabilis).